The primary structure comprises 655 residues: p-hydroxybenzoic acid efflux pump subunit AaeB (655 aa).

11 consecutive transmembrane segments (helical) span residues 13-33, 38-58, 67-89, 93-112, 121-141, 152-172, 370-390, 407-427, 431-451, 459-479, and 482-502; these read FAVKLATAIVLALFVGFHFQL, WAVLTAAIVAAGPAFAAGGEP, GFLRIIGTFIGCIAGLVIIIAMI, LLMILVCCIWAGFCTWISSL, WGLAGYTALIIVITIQPEPLL, EIVIGIVCAIMADLLFSPRSI, LFWLWTGWTSGSGAMVMIAVV, FIYGTLAALPLGLLYFLVIIP, QSMLLLCISLAVLGFFLGIEV, MGALASTINIIVLDNPMTFHF, and FLDSALGQIVGCVLAFTVILL.

It belongs to the aromatic acid exporter ArAE (TC 2.A.85) family.

The protein localises to the cell inner membrane. Its function is as follows. Forms an efflux pump with AaeA. Could function as a metabolic relief valve, allowing to eliminate certain compounds when they accumulate to high levels in the cell. In Escherichia coli O9:H4 (strain HS), this protein is p-hydroxybenzoic acid efflux pump subunit AaeB.